A 342-amino-acid chain; its full sequence is UDP-N-acetylenolpyruvoylglucosamine reductase (342 aa).

In terms of domain architecture, FAD-binding PCMH-type spans 13–183; the sequence is IDHNAQHIVC…VAVGLRLPKE (171 aa). Arg159 is a catalytic residue. Residue Tyr190 coordinates substrate. Ser229 serves as the catalytic Proton donor. The active site involves Glu325.

This sequence belongs to the MurB family. As to quaternary structure, monomer. It depends on FAD as a cofactor.

The protein localises to the cytoplasm. The catalysed reaction is UDP-N-acetyl-alpha-D-muramate + NADP(+) = UDP-N-acetyl-3-O-(1-carboxyvinyl)-alpha-D-glucosamine + NADPH + H(+). It participates in cell wall biogenesis; peptidoglycan biosynthesis. Its function is as follows. Cell wall formation. The sequence is that of UDP-N-acetylenolpyruvoylglucosamine reductase (murB) from Escherichia coli (strain K12).